We begin with the raw amino-acid sequence, 361 residues long: Cyclin-D3-3 (361 aa).

Belongs to the cyclin family. Cyclin D subfamily.

Functionally, promotes divisions in the guard cells (GCs) after the guard mother cells (GMC) symmetric division. The protein is Cyclin-D3-3 (CYCD3-3) of Arabidopsis thaliana (Mouse-ear cress).